Here is a 194-residue protein sequence, read N- to C-terminus: Phosphoheptose isomerase (194 aa).

An SIS domain is found at 37 to 194; it reads IAKSFKNKNK…IIEKEMKKIN (158 aa). Substrate is bound at residue 52–54; it reads NGG. Residues His-61 and Glu-65 each coordinate Zn(2+). Residues Glu-65, 93-94, 119-121, Ser-124, and Gln-172 contribute to the substrate site; these read ND and STS. The Zn(2+) site is built by Gln-172 and His-180.

Belongs to the SIS family. GmhA subfamily. As to quaternary structure, homotetramer. Requires Zn(2+) as cofactor.

Its subcellular location is the cytoplasm. It catalyses the reaction 2 D-sedoheptulose 7-phosphate = D-glycero-alpha-D-manno-heptose 7-phosphate + D-glycero-beta-D-manno-heptose 7-phosphate. Its pathway is carbohydrate biosynthesis; D-glycero-D-manno-heptose 7-phosphate biosynthesis; D-glycero-alpha-D-manno-heptose 7-phosphate and D-glycero-beta-D-manno-heptose 7-phosphate from sedoheptulose 7-phosphate: step 1/1. Functionally, catalyzes the isomerization of sedoheptulose 7-phosphate in D-glycero-D-manno-heptose 7-phosphate. This chain is Phosphoheptose isomerase, found in Buchnera aphidicola subsp. Schizaphis graminum (strain Sg).